The sequence spans 297 residues: Ribosomal RNA small subunit methyltransferase H (297 aa).

S-adenosyl-L-methionine contacts are provided by residues 36-38 (GGH), Asp56, Leu90, Asp104, and His111.

The protein belongs to the methyltransferase superfamily. RsmH family.

It localises to the cytoplasm. It carries out the reaction cytidine(1402) in 16S rRNA + S-adenosyl-L-methionine = N(4)-methylcytidine(1402) in 16S rRNA + S-adenosyl-L-homocysteine + H(+). Its function is as follows. Specifically methylates the N4 position of cytidine in position 1402 (C1402) of 16S rRNA. In Dictyoglomus thermophilum (strain ATCC 35947 / DSM 3960 / H-6-12), this protein is Ribosomal RNA small subunit methyltransferase H.